The sequence spans 176 residues: Large ribosomal subunit protein uL6 (176 aa).

The segment covering arginine 151–glutamine 169 has biased composition (basic and acidic residues). Residues arginine 151–lysine 176 are disordered.

The protein belongs to the universal ribosomal protein uL6 family. As to quaternary structure, part of the 50S ribosomal subunit.

In terms of biological role, this protein binds to the 23S rRNA, and is important in its secondary structure. It is located near the subunit interface in the base of the L7/L12 stalk, and near the tRNA binding site of the peptidyltransferase center. The chain is Large ribosomal subunit protein uL6 from Desulfosudis oleivorans (strain DSM 6200 / JCM 39069 / Hxd3) (Desulfococcus oleovorans).